We begin with the raw amino-acid sequence, 558 residues long: Polypeptide N-acetylgalactosaminyltransferase 16 (558 aa).

At 1–6 (MRKIRA) the chain is on the cytoplasmic side. The chain crosses the membrane as a helical; Signal-anchor for type II membrane protein span at residues 7 to 26 (NAIAILTVAWILGTFYYLWQ). Residues 27–558 (DNRAHAASSS…AQQWQLLPHT (532 aa)) are Lumenal-facing. The segment covering 34-46 (SSSGRGAQRAGGR) has biased composition (low complexity). The disordered stretch occupies residues 34-53 (SSSGRGAQRAGGRPEQLRED). Disulfide bonds link C113-C340, C331-C409, C441-C460, C486-C506, and C530-C543. The catalytic subdomain A stretch occupies residues 122–227 (LPATSVIITF…VEWLQPMLQR (106 aa)). Substrate contacts are provided by D163 and R188. A Mn(2+)-binding site is contributed by D211. S212 is a binding site for substrate. H213 lines the Mn(2+) pocket. Residues 286-348 (PIRTPVIAGG…PCSRVGHVFR (63 aa)) form a catalytic subdomain B region. Residue W317 participates in substrate binding. A Mn(2+)-binding site is contributed by H345. Substrate is bound by residues R348, H351, and Y353. In terms of domain architecture, Ricin B-type lectin spans 428-555 (KEVLPGVIKQ…DAQAQQWQLL (128 aa)).

The protein belongs to the glycosyltransferase 2 family. GalNAc-T subfamily. Mn(2+) serves as cofactor. As to expression, in the CNS, it is predominantly expressed in several distinct hypothalamic, thalamic and amygdaloid nuclei. The most abundant level of expression is in the paraventricular, ventromedial and arcuate nuclei of the hypothalamus, the anterodorsal and parafascicular nuclei of the thalamus and the central, basomedial and medial nuclei of the amygdala. Also expressed in cerebral cortex, lateral septum, habenula and hippocampus.

The protein localises to the golgi apparatus membrane. The enzyme catalyses L-seryl-[protein] + UDP-N-acetyl-alpha-D-galactosamine = a 3-O-[N-acetyl-alpha-D-galactosaminyl]-L-seryl-[protein] + UDP + H(+). It catalyses the reaction L-threonyl-[protein] + UDP-N-acetyl-alpha-D-galactosamine = a 3-O-[N-acetyl-alpha-D-galactosaminyl]-L-threonyl-[protein] + UDP + H(+). It functions in the pathway protein modification; protein glycosylation. In terms of biological role, catalyzes the initial reaction in O-linked oligosaccharide biosynthesis, the transfer of an N-acetyl-D-galactosamine residue to a serine or threonine residue on the protein receptor. The sequence is that of Polypeptide N-acetylgalactosaminyltransferase 16 (Galnt16) from Mus musculus (Mouse).